We begin with the raw amino-acid sequence, 126 residues long: Large ribosomal subunit protein bL17 (126 aa).

This sequence belongs to the bacterial ribosomal protein bL17 family. As to quaternary structure, part of the 50S ribosomal subunit. Contacts protein L32.

This Rickettsia felis (strain ATCC VR-1525 / URRWXCal2) (Rickettsia azadi) protein is Large ribosomal subunit protein bL17.